We begin with the raw amino-acid sequence, 243 residues long: Uridylate kinase (243 aa).

Lys18–Gly21 contacts ATP. Gly59 is a UMP binding site. Gly60 and Arg64 together coordinate ATP. UMP-binding positions include Asp79 and Met140–Thr147. Positions 173 and 176 each coordinate ATP.

It belongs to the UMP kinase family. In terms of assembly, homohexamer.

It localises to the cytoplasm. It carries out the reaction UMP + ATP = UDP + ADP. It participates in pyrimidine metabolism; CTP biosynthesis via de novo pathway; UDP from UMP (UMPK route): step 1/1. With respect to regulation, inhibited by UTP. Catalyzes the reversible phosphorylation of UMP to UDP. This is Uridylate kinase from Corynebacterium diphtheriae (strain ATCC 700971 / NCTC 13129 / Biotype gravis).